The chain runs to 175 residues: Sec-independent protein translocase protein TatB (175 aa).

Residues 1 to 21 (MFDIGWSELVLIGVVALIAIG) form a helical membrane-spanning segment. Disordered regions lie at residues 100-132 (KPAE…PTPE) and 155-175 (QAPV…AKAS). Residues 111–132 (EAPATSSEALTTPTTPEAPTPE) are compositionally biased toward low complexity.

Belongs to the TatB family. In terms of assembly, the Tat system comprises two distinct complexes: a TatABC complex, containing multiple copies of TatA, TatB and TatC subunits, and a separate TatA complex, containing only TatA subunits. Substrates initially bind to the TatABC complex, which probably triggers association of the separate TatA complex to form the active translocon.

It localises to the cell inner membrane. Its function is as follows. Part of the twin-arginine translocation (Tat) system that transports large folded proteins containing a characteristic twin-arginine motif in their signal peptide across membranes. Together with TatC, TatB is part of a receptor directly interacting with Tat signal peptides. TatB may form an oligomeric binding site that transiently accommodates folded Tat precursor proteins before their translocation. In Bradyrhizobium diazoefficiens (strain JCM 10833 / BCRC 13528 / IAM 13628 / NBRC 14792 / USDA 110), this protein is Sec-independent protein translocase protein TatB.